The sequence spans 204 residues: Urease accessory protein UreG (204 aa).

Position 11-18 (11-18 (GPVGAGKH)) interacts with GTP.

This sequence belongs to the SIMIBI class G3E GTPase family. UreG subfamily. In terms of assembly, homodimer. UreD, UreF and UreG form a complex that acts as a GTP-hydrolysis-dependent molecular chaperone, activating the urease apoprotein by helping to assemble the nickel containing metallocenter of UreC. The UreE protein probably delivers the nickel.

Its subcellular location is the cytoplasm. Facilitates the functional incorporation of the urease nickel metallocenter. This process requires GTP hydrolysis, probably effectuated by UreG. The polypeptide is Urease accessory protein UreG (Staphylococcus xylosus).